Reading from the N-terminus, the 117-residue chain is MAEQISSAKAEARTVRIAPRKARLVVDLIRGKSVAEALAILEFTPRAASPIVEKVLRSAIANAEHNYDLESANLYVSEAYVNEGATLKRFRPRAKGMASPINKRTSHVVVVVSEKND.

The protein belongs to the universal ribosomal protein uL22 family. As to quaternary structure, part of the 50S ribosomal subunit.

This protein binds specifically to 23S rRNA; its binding is stimulated by other ribosomal proteins, e.g. L4, L17, and L20. It is important during the early stages of 50S assembly. It makes multiple contacts with different domains of the 23S rRNA in the assembled 50S subunit and ribosome. In terms of biological role, the globular domain of the protein is located near the polypeptide exit tunnel on the outside of the subunit, while an extended beta-hairpin is found that lines the wall of the exit tunnel in the center of the 70S ribosome. The polypeptide is Large ribosomal subunit protein uL22 (Lactobacillus helveticus (strain DPC 4571)).